Reading from the N-terminus, the 295-residue chain is Dual specificity protein phosphatase 15 (295 aa).

The Tyrosine-protein phosphatase domain maps to 1–141 (MTEGVLPGLY…LEEFGWASSQ (141 aa)). Threonine 2 carries N-myristoyl glycine lipidation. Catalysis depends on cysteine 85, which acts as the Phosphocysteine intermediate. Positions 251-270 (SSSCTLSASTERPDGSSTPG) are enriched in polar residues. Positions 251 to 272 (SSSCTLSASTERPDGSSTPGNP) are disordered.

This sequence belongs to the protein-tyrosine phosphatase family. Non-receptor class dual specificity subfamily. As to expression, highly expressed in testis. Expressed in brain; up-regulated in patients with multiple sclerosis gray matter lesions.

The protein localises to the cytoplasm. It localises to the cell membrane. It catalyses the reaction O-phospho-L-tyrosyl-[protein] + H2O = L-tyrosyl-[protein] + phosphate. The enzyme catalyses O-phospho-L-seryl-[protein] + H2O = L-seryl-[protein] + phosphate. It carries out the reaction O-phospho-L-threonyl-[protein] + H2O = L-threonyl-[protein] + phosphate. Its function is as follows. May dephosphorylate MAPK13, ATF2, ERBB3, PDGFRB and SNX6. May play a role in the regulation of oligodendrocyte differentiation. May play a role in the regulation of myelin formation. Involved in the regulation of Erk1/2 phosphorylation in Schwann cells; the signaling may be linked to the regulation of myelination. The polypeptide is Dual specificity protein phosphatase 15 (Homo sapiens (Human)).